The sequence spans 397 residues: Mediator of RNA polymerase II transcription subunit 3 (397 aa).

N-acetylmethionine is present on Met1. The segment covering 147–165 has biased composition (low complexity); that stretch reads ASTPTTTATPHANPITHAH. Disordered regions lie at residues 147–227, 288–327, and 346–370; these read ASTP…AQAQ, SMGA…QSQL, and FQQQ…MGMN. Polar residues-rich tracts occupy residues 166-178 and 189-202; these read SLSN…TMQH and SGST…HNST. The segment covering 211 to 223 has biased composition (basic residues); sequence KKPRKPRQTKKAK. The segment covering 290-303 has biased composition (polar residues); sequence GAQNQGGQVSMSQF. Over residues 309–322 the composition is skewed to low complexity; that stretch reads GSNPNTNTNSNNTP.

The protein belongs to the mediator complex subunit 3 family. As to quaternary structure, component of the Mediator complex, which is composed of at least 21 subunits that form three structurally distinct submodules. The Mediator head module contains MED6, MED8, MED11, SRB4/MED17, SRB5/MED18, ROX3/MED19, SRB2/MED20 and SRB6/MED22, the middle module contains MED1, MED4, NUT1/MED5, MED7, CSE2/MED9, NUT2/MED10, SRB7/MED21 and SOH1/MED31, and the tail module contains MED2, PGD1/MED3, RGR1/MED14, GAL11/MED15 and SIN4/MED16. The head and the middle modules interact directly with RNA polymerase II, whereas the elongated tail module interacts with gene-specific regulatory proteins. PGD1/MED3 interacts directly with the CYC8-TUP1 corepressor proteins.

The protein resides in the nucleus. In terms of biological role, component of the Mediator complex, a coactivator involved in the regulated transcription of nearly all RNA polymerase II-dependent genes. Mediator functions as a bridge to convey information from gene-specific regulatory proteins to the basal RNA polymerase II transcription machinery. The Mediator complex, having a compact conformation in its free form, is recruited to promoters by direct interactions with regulatory proteins and serves for the assembly of a functional preinitiation complex with RNA polymerase II and the general transcription factors. The Mediator complex unfolds to an extended conformation and partially surrounds RNA polymerase II, specifically interacting with the unphosphorylated form of the C-terminal domain (CTD) of RNA polymerase II. The Mediator complex dissociates from the RNA polymerase II holoenzyme and stays at the promoter when transcriptional elongation begins. PGD1/MED3 is also involved in direct repeat recombination. The protein is Mediator of RNA polymerase II transcription subunit 3 (PGD1) of Saccharomyces cerevisiae (strain ATCC 204508 / S288c) (Baker's yeast).